Consider the following 398-residue polypeptide: Phosphoglycerate kinase (398 aa).

Substrate contacts are provided by residues 21 to 23 (DFN), R36, 59 to 62 (HFGR), R117, and R150. Residues K200, E321, and 351 to 354 (GGDS) contribute to the ATP site.

It belongs to the phosphoglycerate kinase family. As to quaternary structure, monomer.

It is found in the cytoplasm. The catalysed reaction is (2R)-3-phosphoglycerate + ATP = (2R)-3-phospho-glyceroyl phosphate + ADP. The protein operates within carbohydrate degradation; glycolysis; pyruvate from D-glyceraldehyde 3-phosphate: step 2/5. This Wolbachia pipientis wMel protein is Phosphoglycerate kinase.